The sequence spans 453 residues: Dihydrolipoyllysine-residue succinyltransferase component of 2-oxoglutarate dehydrogenase complex, mitochondrial (453 aa).

A mitochondrion-targeting transit peptide spans 1–67 (MLSRSRCVSR…RFFRTTAVCK (67 aa)). Positions 70 to 144 (LVTVKTPAFA…EGGTPLFTLR (75 aa)) constitute a Lipoyl-binding domain. Serine 81 bears the Phosphoserine mark. Position 110 is an N6-lipoyllysine (lysine 110). Residues 152–172 (KAKPAEAPAAAAPKAEPTAAA) show a composition bias toward low complexity. Positions 152-225 (KAKPAEAPAA…GKGLRSEHRE (74 aa)) are disordered. An N6-acetyllysine modification is found at lysine 154. A compositionally biased stretch (pro residues) spans 173 to 196 (VPPPAAPIPTQMPPVPSPSQPPSG). N6-acetyllysine occurs at positions 267, 272, 273, 277, and 307. Residues histidine 424 and aspartate 428 contribute to the active site.

It belongs to the 2-oxoacid dehydrogenase family. The 2-oxoglutarate dehydrogenase complex is composed of OGDH (2-oxoglutarate dehydrogenase; E1), DLST (dihydrolipoamide succinyltransferase; E2), DLD (dihydrolipoamide dehydrogenase; E3) and the assembly factor KGD4. It contains multiple copies of the three enzymatic components (E1, E2 and E3). In the nucleus, the 2-oxoglutarate dehydrogenase complex associates with KAT2A. Interacts with ABHD11; this interaction maintains the functional lipoylation of the 2-oxoglutarate dehydrogenase complex. It depends on (R)-lipoate as a cofactor.

Its subcellular location is the mitochondrion matrix. It localises to the nucleus. The catalysed reaction is N(6)-[(R)-dihydrolipoyl]-L-lysyl-[protein] + succinyl-CoA = N(6)-[(R)-S(8)-succinyldihydrolipoyl]-L-lysyl-[protein] + CoA. Its pathway is amino-acid degradation; L-lysine degradation via saccharopine pathway; glutaryl-CoA from L-lysine: step 6/6. It participates in carbohydrate metabolism; tricarboxylic acid cycle. Functionally, dihydrolipoamide succinyltransferase (E2) component of the 2-oxoglutarate dehydrogenase complex. The 2-oxoglutarate dehydrogenase complex catalyzes the overall conversion of 2-oxoglutarate to succinyl-CoA and CO(2). The 2-oxoglutarate dehydrogenase complex is mainly active in the mitochondrion. A fraction of the 2-oxoglutarate dehydrogenase complex also localizes in the nucleus and is required for lysine succinylation of histones: associates with KAT2A on chromatin and provides succinyl-CoA to histone succinyltransferase KAT2A. The protein is Dihydrolipoyllysine-residue succinyltransferase component of 2-oxoglutarate dehydrogenase complex, mitochondrial of Homo sapiens (Human).